Here is a 256-residue protein sequence, read N- to C-terminus: Small ribosomal subunit protein uS2 (256 aa).

Residues 229 to 256 (PVDDNGDYGDFDEAIDEYADETDASESE) are disordered. Residues 232-256 (DNGDYGDFDEAIDEYADETDASESE) are compositionally biased toward acidic residues.

The protein belongs to the universal ribosomal protein uS2 family.

This Picosynechococcus sp. (strain ATCC 27264 / PCC 7002 / PR-6) (Agmenellum quadruplicatum) protein is Small ribosomal subunit protein uS2.